A 281-amino-acid chain; its full sequence is Nucleotide-binding protein CTN_0898 (281 aa).

9 to 16 (GLSGAGKT) is an ATP binding site. GTP is bound at residue 58 to 61 (DVRS).

Belongs to the RapZ-like family.

In terms of biological role, displays ATPase and GTPase activities. This is Nucleotide-binding protein CTN_0898 from Thermotoga neapolitana (strain ATCC 49049 / DSM 4359 / NBRC 107923 / NS-E).